A 191-amino-acid polypeptide reads, in one-letter code: Glucose-6-phosphate 1-dehydrogenase (191 aa).

The residue at position 2 (Ala2) is an N-acetylalanine. At Ser8 the chain carries Phosphoserine. Thr10 carries the phosphothreonine modification. NADP(+) is bound by residues 38–45 (GASGDLAK) and Tyr86. Asp101 provides a ligand contact to D-glucose 6-phosphate. The active-site Proton acceptor is His106. Residue Arg163 participates in NADP(+) binding. At Lys173 the chain carries N6-acetyllysine. Tyr179 and Trp185 together coordinate NADP(+). Tyr179 bears the Phosphotyrosine mark.

It belongs to the glucose-6-phosphate dehydrogenase family. In terms of assembly, homotetramer; dimer of dimers. Interacts with SIRT2; the interaction is enhanced by H(2)O(2) treatment. Forms a ternary complex with ALDOB and TP53; this interaction is direct. ALDOB stabilizes the complex inhibiting G6PD activity and keeping oxidative pentose phosphate metabolism in check. Post-translationally, acetylated by ELP3; acetylation inhibits its homodimerization and enzyme activity. Deacetylated by SIRT2; deacetylation stimulates its enzyme activity.

It localises to the cytoplasm. The protein resides in the cytosol. Its subcellular location is the membrane. It catalyses the reaction D-glucose 6-phosphate + NADP(+) = 6-phospho-D-glucono-1,5-lactone + NADPH + H(+). It participates in carbohydrate degradation; pentose phosphate pathway; D-ribulose 5-phosphate from D-glucose 6-phosphate (oxidative stage): step 1/3. In terms of biological role, cytosolic glucose-6-phosphate dehydrogenase that catalyzes the first and rate-limiting step of the oxidative branch within the pentose phosphate pathway/shunt, an alternative route to glycolysis for the dissimilation of carbohydrates and a major source of reducing power and metabolic intermediates for fatty acid and nucleic acid biosynthetic processes. This is Glucose-6-phosphate 1-dehydrogenase (G6PD) from Didelphis virginiana (North American opossum).